A 387-amino-acid chain; its full sequence is Phosphoglycerate kinase (387 aa).

Residues 21–23 (DLN), arginine 36, 59–62 (HLGR), arginine 113, and arginine 146 each bind substrate. Residues lysine 197, glutamate 314, and 340 to 343 (GGDT) each bind ATP.

The protein belongs to the phosphoglycerate kinase family. In terms of assembly, monomer.

Its subcellular location is the cytoplasm. The enzyme catalyses (2R)-3-phosphoglycerate + ATP = (2R)-3-phospho-glyceroyl phosphate + ADP. The protein operates within carbohydrate degradation; glycolysis; pyruvate from D-glyceraldehyde 3-phosphate: step 2/5. The protein is Phosphoglycerate kinase of Pseudomonas paraeruginosa (strain DSM 24068 / PA7) (Pseudomonas aeruginosa (strain PA7)).